The chain runs to 805 residues: Leucine--tRNA ligase (805 aa).

Residues 39–50 (PYPSGKGLHVGH) carry the 'HIGH' region motif. The short motif at 583–587 (KMSKS) is the 'KMSKS' region element. Lys-586 contributes to the ATP binding site.

It belongs to the class-I aminoacyl-tRNA synthetase family.

It is found in the cytoplasm. The enzyme catalyses tRNA(Leu) + L-leucine + ATP = L-leucyl-tRNA(Leu) + AMP + diphosphate. This is Leucine--tRNA ligase from Mycoplasmoides gallisepticum (strain R(low / passage 15 / clone 2)) (Mycoplasma gallisepticum).